The following is a 535-amino-acid chain: Probable galacturonosyltransferase 12 (535 aa).

Topologically, residues 1-37 (MQLHISPSLRHVTVVTGKGLREFIKVKVGSRRFSYQM) are cytoplasmic. A helical; Signal-anchor for type II membrane protein membrane pass occupies residues 38–58 (VFYSLLFFTFLLRFVFVLSTV). The Lumenal segment spans residues 59–535 (DTIDGDPSPC…FIKSCHIRAS (477 aa)). N397 and N430 each carry an N-linked (GlcNAc...) asparagine glycan.

The protein belongs to the glycosyltransferase 8 family. Highly expressed in stems. Detected in roots, inflorescences, siliques, and leaves. Expressed in cells undergoing secondary wall thickening, including interfascicular fibers and primary and secondary xylem.

The protein resides in the golgi apparatus membrane. It functions in the pathway glycan metabolism; pectin biosynthesis. Its function is as follows. Involved in pectin assembly and/or distribution, and in the synthesis of secondary wall glucuronoxylan. Probably involved in the synthesis of the glycosyl sequence at the glucuronoxylan reducing end. May be involved in synthesis of a complex glycan primer for xylan synthesis. In Arabidopsis thaliana (Mouse-ear cress), this protein is Probable galacturonosyltransferase 12 (GAUT12).